A 386-amino-acid chain; its full sequence is Succinate--CoA ligase [ADP-forming] subunit beta (386 aa).

The 236-residue stretch at 9–244 (KAVLRSYGVS…LDEEDAKEIE (236 aa)) folds into the ATP-grasp domain. ATP contacts are provided by residues lysine 46, 53–55 (GRG), glutamate 99, cysteine 102, and glutamate 107. The Mg(2+) site is built by asparagine 199 and aspartate 213. Substrate-binding positions include asparagine 264 and 321-323 (GIM).

This sequence belongs to the succinate/malate CoA ligase beta subunit family. In terms of assembly, heterotetramer of two alpha and two beta subunits. Mg(2+) serves as cofactor.

It carries out the reaction succinate + ATP + CoA = succinyl-CoA + ADP + phosphate. It catalyses the reaction GTP + succinate + CoA = succinyl-CoA + GDP + phosphate. The protein operates within carbohydrate metabolism; tricarboxylic acid cycle; succinate from succinyl-CoA (ligase route): step 1/1. Functionally, succinyl-CoA synthetase functions in the citric acid cycle (TCA), coupling the hydrolysis of succinyl-CoA to the synthesis of either ATP or GTP and thus represents the only step of substrate-level phosphorylation in the TCA. The beta subunit provides nucleotide specificity of the enzyme and binds the substrate succinate, while the binding sites for coenzyme A and phosphate are found in the alpha subunit. The protein is Succinate--CoA ligase [ADP-forming] subunit beta of Bacillus thuringiensis (strain Al Hakam).